The chain runs to 514 residues: Bifunctional purine biosynthesis protein PurH (514 aa).

In terms of domain architecture, MGS-like spans 1 to 142 (MLALLSVSDK…KNFRHVSVVV (142 aa)).

It belongs to the PurH family.

The catalysed reaction is (6R)-10-formyltetrahydrofolate + 5-amino-1-(5-phospho-beta-D-ribosyl)imidazole-4-carboxamide = 5-formamido-1-(5-phospho-D-ribosyl)imidazole-4-carboxamide + (6S)-5,6,7,8-tetrahydrofolate. The enzyme catalyses IMP + H2O = 5-formamido-1-(5-phospho-D-ribosyl)imidazole-4-carboxamide. The protein operates within purine metabolism; IMP biosynthesis via de novo pathway; 5-formamido-1-(5-phospho-D-ribosyl)imidazole-4-carboxamide from 5-amino-1-(5-phospho-D-ribosyl)imidazole-4-carboxamide (10-formyl THF route): step 1/1. It functions in the pathway purine metabolism; IMP biosynthesis via de novo pathway; IMP from 5-formamido-1-(5-phospho-D-ribosyl)imidazole-4-carboxamide: step 1/1. The chain is Bifunctional purine biosynthesis protein PurH from Myxococcus xanthus (strain DK1622).